Here is a 692-residue protein sequence, read N- to C-terminus: E3 ubiquitin-protein ligase MARCHF7 (692 aa).

N-acetylmethionine is present on methionine 1. Disordered stretches follow at residues 1–165 (MESK…SHRS), 201–280 (STNH…GRRT), 296–343 (FFSR…RASE), 360–425 (LSQN…HLFR), 440–474 (SLGA…RNTG), and 512–532 (SSAD…PEKL). Positions 37–48 (YHSRDSSFRLDS) are enriched in basic and acidic residues. 2 stretches are compositionally biased toward polar residues: residues 61 to 83 (PYQS…SQNQ) and 95 to 132 (SCTN…SSMV). Over residues 140–153 (LMRERRDLERRRDS) the composition is skewed to basic and acidic residues. Over residues 201–214 (STNHQLPSEHQTVP) the composition is skewed to polar residues. Residues 215 to 233 (SSRDSSRSSFRSHFSPRQS) show a composition bias toward low complexity. Over residues 235 to 272 (SFRNSSHPAFSYLSSRNETPTISSSERAGSSQRPFQES) the composition is skewed to polar residues. A compositionally biased stretch (low complexity) spans 296–305 (FFSRRSSQDS). Polar residues predominate over residues 306-336 (LNTRSLSSENYISPRTLTSQSRNNGASSSEV). Serine 318 and serine 389 each carry phosphoserine. The span at 450–462 (ASGASGNASASGS) shows a compositional bias: low complexity. Residues 516–532 (GKSEKAKSAPSRDPEKL) show a composition bias toward basic and acidic residues. The segment at 545 to 615 (DEEEEGDLCR…ELCKEKLQLN (71 aa)) adopts an RING-CH-type zinc-finger fold. The Zn(2+) site is built by cysteine 553, cysteine 556, cysteine 571, cysteine 573, histidine 581, cysteine 584, cysteine 605, and cysteine 608. At threonine 687 the chain carries Phosphothreonine. Phosphoserine is present on serine 688.

It localises to the cytoplasm. It carries out the reaction S-ubiquitinyl-[E2 ubiquitin-conjugating enzyme]-L-cysteine + [acceptor protein]-L-lysine = [E2 ubiquitin-conjugating enzyme]-L-cysteine + N(6)-ubiquitinyl-[acceptor protein]-L-lysine.. Its pathway is protein modification; protein ubiquitination. In terms of biological role, E3 ubiquitin-protein ligase which may specifically enhance the E2 activity of HIP2. E3 ubiquitin ligases accept ubiquitin from an E2 ubiquitin-conjugating enzyme in the form of a thioester and then directly transfer the ubiquitin to targeted substrates. May be involved in T-cell proliferation by regulating LIF secretion. May play a role in lysosome homeostasis. Promotes 'Lys-6', 'Lys-11' and 'Lys-63'-linked mixed polyubiquitination on ATG14 leading to the inhibition of autophagy by impairing the interaction between ATG14 and STX7. Participates in the dopamine-mediated negative regulation of the NLRP3 inflammasome by promoting its uibiquitination and subsequent degradation. In Rattus norvegicus (Rat), this protein is E3 ubiquitin-protein ligase MARCHF7 (Marchf7).